The following is a 261-amino-acid chain: DNA repair protein RecO (261 aa).

It belongs to the RecO family.

Functionally, involved in DNA repair and RecF pathway recombination. In Limosilactobacillus reuteri (strain DSM 20016) (Lactobacillus reuteri), this protein is DNA repair protein RecO.